Reading from the N-terminus, the 362-residue chain is Severin (362 aa).

The Gelsolin-like 1 repeat unit spans residues 53-102 (FKVVPVPESSYGKFYDGDSYIILHTFKEGNSLKHDIHFFLGTFTTQDEAG). 162-170 (RLLHISGDK) serves as a coordination point for a 1,2-diacyl-sn-glycero-3-phospho-(1D-myo-inositol-4,5-bisphosphate). Gelsolin-like repeat units follow at residues 172-212 (AKVA…QEKN) and 280-323 (LKFS…NEKK).

Belongs to the villin/gelsolin family.

Functionally, severin blocks the ends of F-actin and causes the fragmentation and depolymerization of actin filaments in a Ca(2+) dependent manner. The polypeptide is Severin (sevA) (Dictyostelium discoideum (Social amoeba)).